A 467-amino-acid chain; its full sequence is A-type ATP synthase subunit B (467 aa).

This sequence belongs to the ATPase alpha/beta chains family. Has multiple subunits with at least A(3), B(3), C, D, E, F, H, I and proteolipid K(x).

Its subcellular location is the cell membrane. In terms of biological role, component of the A-type ATP synthase that produces ATP from ADP in the presence of a proton gradient across the membrane. The B chain is a regulatory subunit. This Methanosphaera stadtmanae (strain ATCC 43021 / DSM 3091 / JCM 11832 / MCB-3) protein is A-type ATP synthase subunit B.